Consider the following 504-residue polypeptide: L-carnitine/gamma-butyrobetaine antiporter (504 aa).

The next 12 membrane-spanning stretches (helical) occupy residues 10–30 (IEPKVFFPPLIIVGILCWLTV), 51–71 (WGWAFEWYMVVMLFGWFWLVF), 92–112 (IFMMFASCTSAAVLFWGSIEI), 143–163 (GPLPWATYSFLSVAFAYFFFV), 195–215 (FYLVALIFAMGTSLGLATPLV), 231–251 (LDAIIITCWIILNAICVACGL), 263–283 (SYLSFLMLGWVFIVSGASFIM), 316–336 (WTVFYWAWWVIYAIQMSIFLA), 347–367 (LCFGMVMGLTASTWILWTVLG), 398–418 (WAALPLSTATMWGFFILCFIA), 446–466 (LLVRIGWSILVGIIGIVLLAL), and 475–495 (AIIAGGCPLFFVNIMVTLSFI).

This sequence belongs to the BCCT transporter (TC 2.A.15) family. CaiT subfamily. In terms of assembly, homotrimer.

The protein localises to the cell inner membrane. It catalyses the reaction 4-(trimethylamino)butanoate(in) + (R)-carnitine(out) = 4-(trimethylamino)butanoate(out) + (R)-carnitine(in). Its pathway is amine and polyamine metabolism; carnitine metabolism. In terms of biological role, catalyzes the exchange of L-carnitine for gamma-butyrobetaine. The sequence is that of L-carnitine/gamma-butyrobetaine antiporter from Escherichia coli O157:H7.